Reading from the N-terminus, the 55-residue chain is Large ribosomal subunit protein bL33 (55 aa).

Residues 1 to 11 show a composition bias toward basic and acidic residues; sequence MAKSGRDKIKL. The tract at residues 1–28 is disordered; the sequence is MAKSGRDKIKLESTAGTGHFYTTTKNKR. Positions 14 to 24 are enriched in polar residues; the sequence is TAGTGHFYTTT.

The protein belongs to the bacterial ribosomal protein bL33 family.

This is Large ribosomal subunit protein bL33 from Janthinobacterium sp. (strain Marseille) (Minibacterium massiliensis).